A 177-amino-acid chain; its full sequence is Large ribosomal subunit protein uL6 (177 aa).

This sequence belongs to the universal ribosomal protein uL6 family. Part of the 50S ribosomal subunit.

Its function is as follows. This protein binds to the 23S rRNA, and is important in its secondary structure. It is located near the subunit interface in the base of the L7/L12 stalk, and near the tRNA binding site of the peptidyltransferase center. The polypeptide is Large ribosomal subunit protein uL6 (Cupriavidus pinatubonensis (strain JMP 134 / LMG 1197) (Cupriavidus necator (strain JMP 134))).